The following is a 222-amino-acid chain: uncharacterized protein (222 aa).

This sequence belongs to the ycf73 family.

It is found in the plastid. The protein localises to the chloroplast. This is an uncharacterized protein from Oryza nivara (Indian wild rice).